We begin with the raw amino-acid sequence, 230 residues long: DNA repair protein RecO (230 aa).

The protein belongs to the RecO family.

Involved in DNA repair and RecF pathway recombination. The chain is DNA repair protein RecO from Pseudoalteromonas translucida (strain TAC 125).